The following is a 179-amino-acid chain: Monothiol glutaredoxin-S12, chloroplastic (179 aa).

Residues Met-1–Lys-61 constitute a chloroplast transit peptide. An N-acetylalanine modification is found at Ala-62. A Glutaredoxin domain is found at Glu-75–Asn-176. Cys-95 is a [2Fe-2S] cluster binding site.

This sequence belongs to the glutaredoxin family. CPYC subfamily.

It is found in the plastid. Its subcellular location is the chloroplast. May only reduce GSH-thiol disulfides, but not protein disulfides. The chain is Monothiol glutaredoxin-S12, chloroplastic (GRXS12) from Arabidopsis thaliana (Mouse-ear cress).